A 184-amino-acid chain; its full sequence is Photosystem I assembly protein Ycf4 (184 aa).

The next 2 helical transmembrane spans lie at 22-42 (FCWA…GTSS) and 57-77 (IIFF…LFIS).

Belongs to the Ycf4 family.

It is found in the plastid. Its subcellular location is the chloroplast thylakoid membrane. Seems to be required for the assembly of the photosystem I complex. The protein is Photosystem I assembly protein Ycf4 of Capsella bursa-pastoris (Shepherd's purse).